Here is a 508-residue protein sequence, read N- to C-terminus: GMP synthase [glutamine-hydrolyzing] (508 aa).

The 189-residue stretch at 1–189 (MILVLDFGSQ…ALLVCGCEKT (189 aa)) folds into the Glutamine amidotransferase type-1 domain. Cysteine 78 acts as the Nucleophile in catalysis. Active-site residues include histidine 163 and glutamate 165. The GMPS ATP-PPase domain occupies 190-383 (WGMQHFAQRE…LGVSQDFLMR (194 aa)). 217 to 223 (SGGVDST) contributes to the ATP binding site.

Homodimer.

It carries out the reaction XMP + L-glutamine + ATP + H2O = GMP + L-glutamate + AMP + diphosphate + 2 H(+). The protein operates within purine metabolism; GMP biosynthesis; GMP from XMP (L-Gln route): step 1/1. Its function is as follows. Catalyzes the synthesis of GMP from XMP. The protein is GMP synthase [glutamine-hydrolyzing] (guaA) of Helicobacter pylori (strain J99 / ATCC 700824) (Campylobacter pylori J99).